The chain runs to 242 residues: Probable transcriptional regulatory protein STH1004 (242 aa).

This sequence belongs to the TACO1 family.

The protein resides in the cytoplasm. This Symbiobacterium thermophilum (strain DSM 24528 / JCM 14929 / IAM 14863 / T) protein is Probable transcriptional regulatory protein STH1004.